Reading from the N-terminus, the 874-residue chain is Alanine--tRNA ligase (874 aa).

Positions 563, 567, 665, and 669 each coordinate Zn(2+).

It belongs to the class-II aminoacyl-tRNA synthetase family. It depends on Zn(2+) as a cofactor.

The protein localises to the cytoplasm. The enzyme catalyses tRNA(Ala) + L-alanine + ATP = L-alanyl-tRNA(Ala) + AMP + diphosphate. Its function is as follows. Catalyzes the attachment of alanine to tRNA(Ala) in a two-step reaction: alanine is first activated by ATP to form Ala-AMP and then transferred to the acceptor end of tRNA(Ala). Also edits incorrectly charged Ser-tRNA(Ala) and Gly-tRNA(Ala) via its editing domain. This is Alanine--tRNA ligase from Haemophilus influenzae (strain PittGG).